Reading from the N-terminus, the 62-residue chain is Large ribosomal subunit protein bL28 (62 aa).

The segment at methionine 1–lysine 28 is disordered.

This sequence belongs to the bacterial ribosomal protein bL28 family.

This Bacillus anthracis (strain CDC 684 / NRRL 3495) protein is Large ribosomal subunit protein bL28.